The following is a 182-amino-acid chain: Adenine phosphoribosyltransferase (182 aa).

The protein belongs to the purine/pyrimidine phosphoribosyltransferase family. In terms of assembly, homodimer.

It localises to the cytoplasm. The catalysed reaction is AMP + diphosphate = 5-phospho-alpha-D-ribose 1-diphosphate + adenine. It functions in the pathway purine metabolism; AMP biosynthesis via salvage pathway; AMP from adenine: step 1/1. Its function is as follows. Catalyzes a salvage reaction resulting in the formation of AMP, that is energically less costly than de novo synthesis. The chain is Adenine phosphoribosyltransferase from Streptomyces coelicolor (strain ATCC BAA-471 / A3(2) / M145).